A 271-amino-acid chain; its full sequence is Formamidopyrimidine-DNA glycosylase (271 aa).

Residue Pro-2 is the Schiff-base intermediate with DNA of the active site. Catalysis depends on Glu-3, which acts as the Proton donor. Catalysis depends on Lys-57, which acts as the Proton donor; for beta-elimination activity. Residues His-90, Arg-109, and Lys-151 each contribute to the DNA site. The FPG-type zinc-finger motif lies at 236–270 (HVYSRGGETCTSCGNLLSEIRLGQRTTVFCGICQT). Arg-260 (proton donor; for delta-elimination activity) is an active-site residue.

It belongs to the FPG family. As to quaternary structure, monomer. Zn(2+) is required as a cofactor.

The enzyme catalyses Hydrolysis of DNA containing ring-opened 7-methylguanine residues, releasing 2,6-diamino-4-hydroxy-5-(N-methyl)formamidopyrimidine.. It catalyses the reaction 2'-deoxyribonucleotide-(2'-deoxyribose 5'-phosphate)-2'-deoxyribonucleotide-DNA = a 3'-end 2'-deoxyribonucleotide-(2,3-dehydro-2,3-deoxyribose 5'-phosphate)-DNA + a 5'-end 5'-phospho-2'-deoxyribonucleoside-DNA + H(+). Its function is as follows. Involved in base excision repair of DNA damaged by oxidation or by mutagenic agents. Acts as a DNA glycosylase that recognizes and removes damaged bases. Has a preference for oxidized purines, such as 7,8-dihydro-8-oxoguanine (8-oxoG). Has AP (apurinic/apyrimidinic) lyase activity and introduces nicks in the DNA strand. Cleaves the DNA backbone by beta-delta elimination to generate a single-strand break at the site of the removed base with both 3'- and 5'-phosphates. The chain is Formamidopyrimidine-DNA glycosylase from Shewanella baltica (strain OS195).